Here is a 216-residue protein sequence, read N- to C-terminus: Ras-related protein RABA1c (216 aa).

20-27 (GDSGVGKS) contacts GTP. Residues 42 to 50 (SKSTIGVEF) carry the Effector region motif. Residues 68-72 (DTAGQ), 126-129 (NKSD), and 156-157 (SA) contribute to the GTP site. 2 S-geranylgeranyl cysteine lipidation sites follow: cysteine 213 and cysteine 214.

It belongs to the small GTPase superfamily. Rab family.

The protein localises to the cell membrane. Functionally, intracellular vesicle trafficking and protein transport. The polypeptide is Ras-related protein RABA1c (RABA1C) (Arabidopsis thaliana (Mouse-ear cress)).